The following is a 376-amino-acid chain: Succinyl-diaminopimelate desuccinylase (376 aa).

His66 is a binding site for Zn(2+). Asp68 is a catalytic residue. A Zn(2+)-binding site is contributed by Asp99. The Proton acceptor role is filled by Glu133. Residues Glu134, Glu162, and His349 each contribute to the Zn(2+) site.

It belongs to the peptidase M20A family. DapE subfamily. As to quaternary structure, homodimer. Zn(2+) is required as a cofactor. It depends on Co(2+) as a cofactor.

The enzyme catalyses N-succinyl-(2S,6S)-2,6-diaminopimelate + H2O = (2S,6S)-2,6-diaminopimelate + succinate. The protein operates within amino-acid biosynthesis; L-lysine biosynthesis via DAP pathway; LL-2,6-diaminopimelate from (S)-tetrahydrodipicolinate (succinylase route): step 3/3. Its function is as follows. Catalyzes the hydrolysis of N-succinyl-L,L-diaminopimelic acid (SDAP), forming succinate and LL-2,6-diaminopimelate (DAP), an intermediate involved in the bacterial biosynthesis of lysine and meso-diaminopimelic acid, an essential component of bacterial cell walls. The chain is Succinyl-diaminopimelate desuccinylase from Vesicomyosocius okutanii subsp. Calyptogena okutanii (strain HA).